The following is a 157-amino-acid chain: Ribosome maturation factor RimP (157 aa).

This sequence belongs to the RimP family.

It localises to the cytoplasm. In terms of biological role, required for maturation of 30S ribosomal subunits. The sequence is that of Ribosome maturation factor RimP from Geobacillus kaustophilus (strain HTA426).